Reading from the N-terminus, the 807-residue chain is Ribosome-releasing factor 2, mitochondrial (807 aa).

The N-terminal 18 residues, 1-18, are a transit peptide targeting the mitochondrion; that stretch reads MFCRKYAFQTWKQFSRFY. The tr-type G domain maps to 27–315; that stretch reads SKTRNIGIIA…GITKYLPSPL (289 aa). GTP-binding positions include 36–43, 100–104, and 154–157; these read AHIDAGKT, DTPGH, and NKMD.

The protein belongs to the TRAFAC class translation factor GTPase superfamily. Classic translation factor GTPase family. EF-G/EF-2 subfamily.

It is found in the mitochondrion. Mitochondrial GTPase that mediates the disassembly of ribosomes from messenger RNA at the termination of mitochondrial protein biosynthesis. Not involved in the GTP-dependent ribosomal translocation step during translation elongation. The sequence is that of Ribosome-releasing factor 2, mitochondrial from Candida dubliniensis (strain CD36 / ATCC MYA-646 / CBS 7987 / NCPF 3949 / NRRL Y-17841) (Yeast).